The sequence spans 637 residues: ATP-dependent rRNA helicase SPB4 (637 aa).

A Q motif motif is present at residues 14-42; it reads WDTLNPPLSEWIRDAVATMGFDQMTPVQA. Residues 45 to 247 form the Helicase ATP-binding domain; sequence LPHFMGNKDV…RVGLRNPVKI (203 aa). Position 58-65 (58-65) interacts with ATP; that stretch reads AVTGSGKT. Residues 195 to 198 carry the DEAD box motif; the sequence is DEAD. Residues 283 to 438 enclose the Helicase C-terminal domain; it reads ALAELLRQLP…TITTSEDDAA (156 aa). Residues 524-631 adopt a coiled-coil conformation; that stretch reads KEKTREQQRK…AAAKQEKDGE (108 aa). Composition is skewed to basic and acidic residues over residues 535 to 553, 563 to 576, 583 to 618, and 625 to 637; these read ALEE…EEFK, SAKH…VERR, RDAE…EKAA, and KQEK…GFDD. The tract at residues 535 to 637 is disordered; that stretch reads ALEEEKSGVK…KDGEFKGFDD (103 aa).

It belongs to the DEAD box helicase family. DDX55/SPB4 subfamily. As to quaternary structure, component of pre-60S ribosomal complexes.

The protein localises to the nucleus. The protein resides in the nucleolus. It catalyses the reaction ATP + H2O = ADP + phosphate + H(+). In terms of biological role, ATP-binding RNA helicase involved in the biogenesis of 60S ribosomal subunits. Binds 90S pre-ribosomal particles and dissociates from pre-60S ribosomal particles after processing of 27SB pre-rRNA. Required for the normal formation of 18S rRNA through the processing of pre-rRNAs at sites A0, A1 and A2, and the normal formation of 25S and 5.8S rRNAs through the processing of pre-rRNAs at sites C1 and C2. The chain is ATP-dependent rRNA helicase SPB4 from Gibberella zeae (strain ATCC MYA-4620 / CBS 123657 / FGSC 9075 / NRRL 31084 / PH-1) (Wheat head blight fungus).